Reading from the N-terminus, the 156-residue chain is Ribosomal RNA large subunit methyltransferase H (156 aa).

S-adenosyl-L-methionine is bound by residues Leu-73, Gly-104, and 123 to 128 (LSALTL).

Belongs to the RNA methyltransferase RlmH family. As to quaternary structure, homodimer.

The protein resides in the cytoplasm. The catalysed reaction is pseudouridine(1915) in 23S rRNA + S-adenosyl-L-methionine = N(3)-methylpseudouridine(1915) in 23S rRNA + S-adenosyl-L-homocysteine + H(+). Its function is as follows. Specifically methylates the pseudouridine at position 1915 (m3Psi1915) in 23S rRNA. This Shewanella sediminis (strain HAW-EB3) protein is Ribosomal RNA large subunit methyltransferase H.